The chain runs to 499 residues: Cytochrome P450 2M1 (499 aa).

C441 provides a ligand contact to heme.

It belongs to the cytochrome P450 family. Requires heme as cofactor. In kidney and in liver from juvenile and sexually mature trout from both sexes.

The protein localises to the endoplasmic reticulum membrane. It is found in the microsome membrane. The catalysed reaction is an organic molecule + reduced [NADPH--hemoprotein reductase] + O2 = an alcohol + oxidized [NADPH--hemoprotein reductase] + H2O + H(+). Functionally, has (omega-6)-hydroxylation activity toward lauric acid. In Oncorhynchus mykiss (Rainbow trout), this protein is Cytochrome P450 2M1 (cyp2m1).